The primary structure comprises 136 residues: Protein scalloped (136 aa).

Its subcellular location is the nucleus. In terms of biological role, probable transcription factor that function in the regulation of cell-specific gene expression during drosophila development, particularly in the differentiation of the nervous system. This Junonia coenia (Peacock butterfly) protein is Protein scalloped (SD).